A 1285-amino-acid chain; its full sequence is Period circadian protein homolog 1 (1285 aa).

The segment at 1-134 (MSGPLEGADG…SSEQSARART (134 aa)) is disordered. The segment at 1 to 151 (MSGPLEGADG…LRELKLRLPP (151 aa)) is interaction with BTRC. 2 stretches are compositionally biased toward low complexity: residues 48-57 (NSNGSSGNES) and 64-115 (GASQ…ASSE). The segment covering 116-132 (QDNPSTSGCSSEQSARA) has biased composition (polar residues). A Phosphothreonine; by CSNK1E modification is found at T121. Residues S122 and S126 each carry the phosphoserine; by CSNK1E modification. Positions 138 to 147 (LMTALRELKL) match the Nuclear export signal 1 motif. 2 PAS domains span residues 208-275 (ITSE…PFRL) and 348-414 (YEAP…KILQ). The 44-residue stretch at 422-465 (HSPIRFCARNGEYVTMDTSWAGFVHPWSRKVAFVLGRHKVRTAP) folds into the PAC domain. A Nuclear export signal 2 motif is present at residues 489 to 498 (LSEQIHRLLL). Disordered stretches follow at residues 503-544 (SSSP…PAPV) and 643-694 (TKRK…KEPV). Composition is skewed to low complexity over residues 523 to 533 (SPGSSSDSNGG) and 648 to 658 (ASSSSCTASSA). The interval 592–811 (ELEVVPMPNQ…GLDSSSATPS (220 aa)) is required for phosphorylation by CSNK1E. Residues S657, S659, S700, and S811 each carry the phosphoserine modification. Disordered regions lie at residues 802–867 (GLDS…PPST) and 931–1030 (LSQA…DALS). A Nuclear localization signal motif is present at residues 820–836 (VPPGRRHHCRSKAKRSR). Positions 823–840 (GRRHHCRSKAKRSRHHHT) are enriched in basic residues. Positions 853 to 867 (SPVPPSGPWPPPPST) are enriched in pro residues. Low complexity predominate over residues 943–954 (ASHSPSPSLTPL). A compositionally biased stretch (polar residues) spans 967 to 979 (FNSRCSSPLQLNL). 2 positions are modified to phosphoserine: S972 and S973. The Nuclear export signal 3 signature appears at 975–982 (LQLNLLQL). Residues 1036 to 1040 (LELLL) carry the LXXLL motif. Over residues 1045-1055 (RSGTGSAASGS) the composition is skewed to low complexity. Disordered regions lie at residues 1045–1091 (RSGT…SKYF) and 1202–1285 (IQDP…NSTS). The segment covering 1056 to 1070 (LGSGLGSGSGSGSHE) has biased composition (gly residues). Positions 1071–1088 (GGSTSASITRSSQSSHTS) are enriched in low complexity. A CRY binding domain region spans residues 1142–1285 (SRDRASVLKQ…ALPAEENSTS (144 aa)). Positions 1229 to 1241 (GEGGGGGGGGGEG) are enriched in gly residues. Residues 1269-1285 (GGSSSSPALPAEENSTS) show a composition bias toward polar residues.

In terms of assembly, homodimer. Component of the circadian core oscillator, which includes the CRY proteins, CLOCK or NPAS2, BMAL1 or BMAL2, CSNK1D and/or CSNK1E, TIMELESS, and the PER proteins. Interacts directly with TIMELESS, PER2, PER3, CRY1 and CRY2. Interacts with BMAL1 and CLOCK. Interacts with GPRASP1. Interacts (phosphorylated) with BTRC and FBXW11; the interactions trigger proteasomal degradation. Interacts with NONO, WDR5 and SFPQ. Interacts with USP2. Interacts with HNF4A. Post-translationally, phosphorylated on serine residues by CSNK1D, CSNK1E and probably also by CSNK1G2. Phosphorylation by CSNK1D or CSNK1E promotes nuclear location of PER proteins as well as ubiquitination and subsequent degradation. May be dephosphorylated by PP1. Ubiquitinated; requires phosphorylation by CSNK1E and interaction with BTRC and FBXW11. Deubiquitinated by USP2. In terms of tissue distribution, expressed in the brain, mainly in the suprachiasmatic nucleus (SCN). Expression also found in the harderian gland, lung, eye, intestine, liver and skeletal muscle.

The protein localises to the nucleus. It is found in the cytoplasm. In terms of biological role, transcriptional repressor which forms a core component of the circadian clock. The circadian clock, an internal time-keeping system, regulates various physiological processes through the generation of approximately 24 hour circadian rhythms in gene expression, which are translated into rhythms in metabolism and behavior. It is derived from the Latin roots 'circa' (about) and 'diem' (day) and acts as an important regulator of a wide array of physiological functions including metabolism, sleep, body temperature, blood pressure, endocrine, immune, cardiovascular, and renal function. Consists of two major components: the central clock, residing in the suprachiasmatic nucleus (SCN) of the brain, and the peripheral clocks that are present in nearly every tissue and organ system. Both the central and peripheral clocks can be reset by environmental cues, also known as Zeitgebers (German for 'timegivers'). The predominant Zeitgeber for the central clock is light, which is sensed by retina and signals directly to the SCN. The central clock entrains the peripheral clocks through neuronal and hormonal signals, body temperature and feeding-related cues, aligning all clocks with the external light/dark cycle. Circadian rhythms allow an organism to achieve temporal homeostasis with its environment at the molecular level by regulating gene expression to create a peak of protein expression once every 24 hours to control when a particular physiological process is most active with respect to the solar day. Transcription and translation of core clock components (CLOCK, NPAS2, BMAL1, BMAL2, PER1, PER2, PER3, CRY1 and CRY2) plays a critical role in rhythm generation, whereas delays imposed by post-translational modifications (PTMs) are important for determining the period (tau) of the rhythms (tau refers to the period of a rhythm and is the length, in time, of one complete cycle). A diurnal rhythm is synchronized with the day/night cycle, while the ultradian and infradian rhythms have a period shorter and longer than 24 hours, respectively. Disruptions in the circadian rhythms contribute to the pathology of cardiovascular diseases, cancer, metabolic syndromes and aging. A transcription/translation feedback loop (TTFL) forms the core of the molecular circadian clock mechanism. Transcription factors, CLOCK or NPAS2 and BMAL1 or BMAL2, form the positive limb of the feedback loop, act in the form of a heterodimer and activate the transcription of core clock genes and clock-controlled genes (involved in key metabolic processes), harboring E-box elements (5'-CACGTG-3') within their promoters. The core clock genes: PER1/2/3 and CRY1/2 which are transcriptional repressors form the negative limb of the feedback loop and interact with the CLOCK|NPAS2-BMAL1|BMAL2 heterodimer inhibiting its activity and thereby negatively regulating their own expression. This heterodimer also activates nuclear receptors NR1D1/2 and RORA/B/G, which form a second feedback loop and which activate and repress BMAL1 transcription, respectively. Regulates circadian target genes expression at post-transcriptional levels, but may not be required for the repression at transcriptional level. Controls PER2 protein decay. Represses CRY2 preventing its repression on CLOCK/BMAL1 target genes such as FXYD5 and SCNN1A in kidney and PPARA in liver. Besides its involvement in the maintenance of the circadian clock, has an important function in the regulation of several processes. Participates in the repression of glucocorticoid receptor NR3C1/GR-induced transcriptional activity by reducing the association of NR3C1/GR to glucocorticoid response elements (GREs) by BMAL1:CLOCK. Plays a role in the modulation of the neuroinflammatory state via the regulation of inflammatory mediators release, such as CCL2 and IL6. In spinal astrocytes, negatively regulates the MAPK14/p38 and MAPK8/JNK MAPK cascades as well as the subsequent activation of NFkappaB. Coordinately regulates the expression of multiple genes that are involved in the regulation of renal sodium reabsorption. Can act as gene expression activator in a gene and tissue specific manner, in kidney enhances WNK1 and SLC12A3 expression in collaboration with CLOCK. Modulates hair follicle cycling. Represses the CLOCK-BMAL1 induced transcription of BHLHE40/DEC1. This Spalax judaei (Judean Mountains blind mole rat) protein is Period circadian protein homolog 1 (PER1).